Here is a 288-residue protein sequence, read N- to C-terminus: 4-hydroxy-tetrahydrodipicolinate synthase (288 aa).

Position 42 (T42) interacts with pyruvate. Y129 functions as the Proton donor/acceptor in the catalytic mechanism. K157 functions as the Schiff-base intermediate with substrate in the catalytic mechanism. Pyruvate is bound at residue I198.

Belongs to the DapA family. Homotetramer; dimer of dimers.

The protein resides in the cytoplasm. The enzyme catalyses L-aspartate 4-semialdehyde + pyruvate = (2S,4S)-4-hydroxy-2,3,4,5-tetrahydrodipicolinate + H2O + H(+). It participates in amino-acid biosynthesis; L-lysine biosynthesis via DAP pathway; (S)-tetrahydrodipicolinate from L-aspartate: step 3/4. Functionally, catalyzes the condensation of (S)-aspartate-beta-semialdehyde [(S)-ASA] and pyruvate to 4-hydroxy-tetrahydrodipicolinate (HTPA). This chain is 4-hydroxy-tetrahydrodipicolinate synthase, found in Chlamydia abortus (strain DSM 27085 / S26/3) (Chlamydophila abortus).